Consider the following 211-residue polypeptide: ATP phosphoribosyltransferase (211 aa).

This sequence belongs to the ATP phosphoribosyltransferase family. Short subfamily. Heteromultimer composed of HisG and HisZ subunits.

It localises to the cytoplasm. It catalyses the reaction 1-(5-phospho-beta-D-ribosyl)-ATP + diphosphate = 5-phospho-alpha-D-ribose 1-diphosphate + ATP. Its pathway is amino-acid biosynthesis; L-histidine biosynthesis; L-histidine from 5-phospho-alpha-D-ribose 1-diphosphate: step 1/9. Functionally, catalyzes the condensation of ATP and 5-phosphoribose 1-diphosphate to form N'-(5'-phosphoribosyl)-ATP (PR-ATP). Has a crucial role in the pathway because the rate of histidine biosynthesis seems to be controlled primarily by regulation of HisG enzymatic activity. The chain is ATP phosphoribosyltransferase from Pseudomonas aeruginosa (strain UCBPP-PA14).